The primary structure comprises 342 residues: UDP-3-O-acylglucosamine N-acyltransferase (342 aa).

Histidine 243 acts as the Proton acceptor in catalysis.

This sequence belongs to the transferase hexapeptide repeat family. LpxD subfamily. In terms of assembly, homotrimer.

It catalyses the reaction a UDP-3-O-[(3R)-3-hydroxyacyl]-alpha-D-glucosamine + a (3R)-hydroxyacyl-[ACP] = a UDP-2-N,3-O-bis[(3R)-3-hydroxyacyl]-alpha-D-glucosamine + holo-[ACP] + H(+). The protein operates within bacterial outer membrane biogenesis; LPS lipid A biosynthesis. In terms of biological role, catalyzes the N-acylation of UDP-3-O-acylglucosamine using 3-hydroxyacyl-ACP as the acyl donor. Is involved in the biosynthesis of lipid A, a phosphorylated glycolipid that anchors the lipopolysaccharide to the outer membrane of the cell. The chain is UDP-3-O-acylglucosamine N-acyltransferase from Coxiella burnetii (strain CbuK_Q154) (Coxiella burnetii (strain Q154)).